The following is a 656-amino-acid chain: UvrABC system protein B (656 aa).

One can recognise a Helicase ATP-binding domain in the interval 23–180; the sequence is EGIKKGYRFQ…QHLAKIGYER (158 aa). 36–43 contacts ATP; the sequence is GVTGSGKT. The Beta-hairpin motif lies at 89–112; sequence YYDYYQPEAYVPTKDLYIEKNADI. The region spanning 426–588 is the Helicase C-terminal domain; it reads QVDDLISEIK…ITPKTIVKPL (163 aa). One can recognise a UVR domain in the interval 614–649; that stretch reads EEYLSLLEEEMYRAASELRYEDAAKLRDEIFRLREE.

This sequence belongs to the UvrB family. In terms of assembly, forms a heterotetramer with UvrA during the search for lesions. Interacts with UvrC in an incision complex.

Its subcellular location is the cytoplasm. The UvrABC repair system catalyzes the recognition and processing of DNA lesions. A damage recognition complex composed of 2 UvrA and 2 UvrB subunits scans DNA for abnormalities. Upon binding of the UvrA(2)B(2) complex to a putative damaged site, the DNA wraps around one UvrB monomer. DNA wrap is dependent on ATP binding by UvrB and probably causes local melting of the DNA helix, facilitating insertion of UvrB beta-hairpin between the DNA strands. Then UvrB probes one DNA strand for the presence of a lesion. If a lesion is found the UvrA subunits dissociate and the UvrB-DNA preincision complex is formed. This complex is subsequently bound by UvrC and the second UvrB is released. If no lesion is found, the DNA wraps around the other UvrB subunit that will check the other stand for damage. The sequence is that of UvrABC system protein B from Pseudothermotoga lettingae (strain ATCC BAA-301 / DSM 14385 / NBRC 107922 / TMO) (Thermotoga lettingae).